Here is a 690-residue protein sequence, read N- to C-terminus: Sodium-dependent phosphate transport protein 2B (690 aa).

Residues Met-1–Glu-42 form a disordered region. Residues Met-1 to Arg-100 are Cytoplasmic-facing. The span at Asp-30–Asn-40 shows a compositional bias: basic and acidic residues. A helical transmembrane segment spans residues Leu-101–Ala-121. Over Phe-122–Ser-135 the chain is Extracellular. Residues Asn-136–Leu-156 form a helical membrane-spanning segment. Topologically, residues Val-157–Arg-212 are cytoplasmic. The helical transmembrane segment at Ala-213–Pro-233 threads the bilayer. The Extracellular portion of the chain corresponds to Val-234 to Leu-362. Residues Asn-295, Asn-308, Asn-313, Asn-321, and Asn-340 are each glycosylated (N-linked (GlcNAc...) asparagine). A disulfide bond links Cys-303 and Cys-350. The helical transmembrane segment at Ala-363 to Ile-383 threads the bilayer. Residues Val-384 to Phe-407 lie on the Cytoplasmic side of the membrane. The helical transmembrane segment at Pro-408 to Phe-428 threads the bilayer. At Ile-429–Leu-485 the chain is on the extracellular side. Residues Gln-486–Pro-506 traverse the membrane as a helical segment. At Phe-507–Tyr-525 the chain is on the cytoplasmic side. Residues Arg-526–Gly-546 form a helical membrane-spanning segment. At Leu-547–Trp-552 the chain is on the extracellular side. The helical transmembrane segment at Arg-553–Arg-573 threads the bilayer. The Cytoplasmic segment spans residues Leu-574 to Ala-689.

It belongs to the SLC34A transporter family. In terms of tissue distribution, highly expressed in lung. Also detected in pancreas, kidney, small intestine, ovary, testis, prostate and mammary gland. In lung, it is found in alveolar type II cells but not in bronchiolar epithelium.

It is found in the apical cell membrane. The catalysed reaction is 3 Na(+)(out) + phosphate(out) = 3 Na(+)(in) + phosphate(in). In terms of biological role, involved in actively transporting phosphate into cells via Na(+) cotransport. The protein is Sodium-dependent phosphate transport protein 2B (SLC34A2) of Homo sapiens (Human).